The following is a 132-amino-acid chain: Large-conductance mechanosensitive channel (132 aa).

2 helical membrane passes run Val14–Leu34 and Gly67–Val87.

Belongs to the MscL family. In terms of assembly, homopentamer.

The protein resides in the cell membrane. Functionally, channel that opens in response to stretch forces in the membrane lipid bilayer. May participate in the regulation of osmotic pressure changes within the cell. The polypeptide is Large-conductance mechanosensitive channel (Bacillus cereus (strain AH820)).